The following is a 186-amino-acid chain: Chromosomal replication initiator protein DnaA (186 aa).

Glu1 is a region of interest (domain I, interacts with DnaA modulators). A region of interest (domain II) is located at residue Glu1. Residues 1-99 (EFFKTFNALI…GALNKVTHTS (99 aa)) are domain III, AAA+ region. Positions 100–186 (LIGRSMTVES…GRNFGGRDHT (87 aa)) are domain IV, binds dsDNA.

This sequence belongs to the DnaA family. In terms of assembly, oligomerizes as a right-handed, spiral filament on DNA at oriC.

It is found in the cytoplasm. In terms of biological role, plays an essential role in the initiation and regulation of chromosomal replication. ATP-DnaA binds to the origin of replication (oriC) to initiate formation of the DNA replication initiation complex once per cell cycle. Binds the DnaA box (a 9 base pair repeat at the origin) and separates the double-stranded (ds)DNA. Forms a right-handed helical filament on oriC DNA; dsDNA binds to the exterior of the filament while single-stranded (ss)DNA is stabiized in the filament's interior. The ATP-DnaA-oriC complex binds and stabilizes one strand of the AT-rich DNA unwinding element (DUE), permitting loading of DNA polymerase. After initiation quickly degrades to an ADP-DnaA complex that is not apt for DNA replication. Binds acidic phospholipids. This chain is Chromosomal replication initiator protein DnaA, found in Wolbachia sp.